Reading from the N-terminus, the 1265-residue chain is Methionine synthase (1265 aa).

Positions 19 to 338 (RDEINAILQK…DHIREIAEAV (320 aa)) constitute a Hcy-binding domain. Zn(2+) contacts are provided by Cys-260, Cys-323, and Cys-324. The region spanning 371-632 (FVNIGERCNV…IHKELLQLCE (262 aa)) is the Pterin-binding domain. (6S)-5,6,7,8-tetrahydrofolate is bound by residues 382–384 (GSR), Asp-449, Asn-470, Asp-537, Asn-579, Arg-585, and Arg-591. Residues 662 to 759 (QTDEWRNGPV…FMEKEREETR (98 aa)) enclose the B12-binding N-terminal domain. Methylcob(III)alamin-binding positions include Glu-709, 782–786 (GDVHD), His-785, Ser-830, Thr-834, and Ala-886. Positions 772 to 907 (QGTIVLATVK…DENLKDEYFE (136 aa)) constitute a B12-binding domain. An AdoMet activation domain is found at 923–1265 (SLKERRYLPL…LGPILGYDTD (343 aa)). S-adenosyl-L-methionine is bound by residues Asp-974, Arg-1172, and 1227 to 1228 (YF). Position 1264 is a phosphothreonine (Thr-1264).

Belongs to the vitamin-B12 dependent methionine synthase family. As to quaternary structure, monomer. Dimer. Forms a multiprotein complex with MMACHC, MMADHC and MTRR. Requires methylcob(III)alamin as cofactor. The cofactor is Zn(2+). Widely expressed. Expressed at the highest levels in pancreas, heart, brain, skeletal muscle and placenta. Expressed at lower levels in lung, liver and kidney.

The protein resides in the cytoplasm. It carries out the reaction (6S)-5-methyl-5,6,7,8-tetrahydrofolate + L-homocysteine = (6S)-5,6,7,8-tetrahydrofolate + L-methionine. Its pathway is amino-acid biosynthesis; L-methionine biosynthesis via de novo pathway; L-methionine from L-homocysteine (MetH route): step 1/1. Its function is as follows. Catalyzes the transfer of a methyl group from methylcob(III)alamin (MeCbl) to homocysteine, yielding enzyme-bound cob(I)alamin and methionine in the cytosol. MeCbl is an active form of cobalamin (vitamin B12) used as a cofactor for methionine biosynthesis. Cob(I)alamin form is regenerated to MeCbl by a transfer of a methyl group from 5-methyltetrahydrofolate. The processing of cobalamin in the cytosol occurs in a multiprotein complex composed of at least MMACHC, MMADHC, MTRR (methionine synthase reductase) and MTR which may contribute to shuttle safely and efficiently cobalamin towards MTR in order to produce methionine. The polypeptide is Methionine synthase (Homo sapiens (Human)).